Reading from the N-terminus, the 496-residue chain is DEAD-box ATP-dependent RNA helicase 38 (496 aa).

The interval 1 to 91 is disordered; it reads MADTVEKVPT…SGDTPYTSAS (91 aa). A2 is modified (N-acetylalanine). A compositionally biased stretch (low complexity) spans 7–25; the sequence is KVPTVVESSSSSTVEASNS. Over residues 27 to 40 the composition is skewed to basic and acidic residues; sequence EKTEPTTEKKKWGD. Acidic residues predominate over residues 41 to 51; that stretch reads VEDDDDEEEAV. A compositionally biased stretch (polar residues) spans 78 to 91; the sequence is KAVTSGDTPYTSAS. The Q motif motif lies at 91–120; sequence SRFEDLNLSPELMKGLYVEMKFEKPSKIQA. Residues 125-301 enclose the Helicase ATP-binding domain; sequence MIMTPPHKHL…ARTVKDPNQL (177 aa). Position 138–145 (138–145) interacts with ATP; sequence AHNGSGKT. Residues 245–248 carry the DEAD box motif; sequence DEAD. In terms of domain architecture, Helicase C-terminal spans 329–483; the sequence is VIKDQIMELG…EIKSWNSEEE (155 aa).

This sequence belongs to the DEAD box helicase family. DDX19/DBP5 subfamily. Interacts with NUP214 (via N-terminus). Constitutively expressed.

It localises to the cytoplasm. Its subcellular location is the nucleus. It carries out the reaction ATP + H2O = ADP + phosphate + H(+). In terms of biological role, ATP-dependent RNA helicase essential for mRNA export from the nucleus. Plays an important role in the positive regulation of CBF/DREB transcription factors. The chain is DEAD-box ATP-dependent RNA helicase 38 (RH38) from Arabidopsis thaliana (Mouse-ear cress).